A 377-amino-acid polypeptide reads, in one-letter code: Succinyl-diaminopimelate desuccinylase (377 aa).

Position 68 (H68) interacts with Zn(2+). Residue D70 is part of the active site. Zn(2+) is bound at residue D101. The active-site Proton acceptor is E135. Zn(2+) is bound by residues E136, E164, and H350.

Belongs to the peptidase M20A family. DapE subfamily. As to quaternary structure, homodimer. It depends on Zn(2+) as a cofactor. Co(2+) serves as cofactor.

It carries out the reaction N-succinyl-(2S,6S)-2,6-diaminopimelate + H2O = (2S,6S)-2,6-diaminopimelate + succinate. Its pathway is amino-acid biosynthesis; L-lysine biosynthesis via DAP pathway; LL-2,6-diaminopimelate from (S)-tetrahydrodipicolinate (succinylase route): step 3/3. Catalyzes the hydrolysis of N-succinyl-L,L-diaminopimelic acid (SDAP), forming succinate and LL-2,6-diaminopimelate (DAP), an intermediate involved in the bacterial biosynthesis of lysine and meso-diaminopimelic acid, an essential component of bacterial cell walls. The chain is Succinyl-diaminopimelate desuccinylase from Acinetobacter baumannii (strain AB0057).